A 315-amino-acid polypeptide reads, in one-letter code: Probable mannose-6-phosphate isomerase GmuF (315 aa).

Zn(2+)-binding residues include Gln95, His97, Glu115, and His172. The active site involves Arg192.

The protein belongs to the mannose-6-phosphate isomerase type 1 family. Requires Zn(2+) as cofactor.

It carries out the reaction D-mannose 6-phosphate = D-fructose 6-phosphate. In terms of biological role, seems to be involved in the degradation of glucomannan. This is Probable mannose-6-phosphate isomerase GmuF (gmuF) from Bacillus subtilis (strain 168).